The following is a 546-amino-acid chain: Arginine--tRNA ligase (546 aa).

The 'HIGH' region motif lies at 122-132 (ANPTGPFTVGH).

The protein belongs to the class-I aminoacyl-tRNA synthetase family. In terms of assembly, monomer.

It localises to the cytoplasm. It catalyses the reaction tRNA(Arg) + L-arginine + ATP = L-arginyl-tRNA(Arg) + AMP + diphosphate. The chain is Arginine--tRNA ligase from Thermotoga petrophila (strain ATCC BAA-488 / DSM 13995 / JCM 10881 / RKU-1).